The following is an 87-amino-acid chain: Mu-conotoxin cal12b (87 aa).

The signal sequence occupies residues 1–19; it reads MKLTCVLVVLLLLLPYGDL. Positions 20–42 are excised as a propeptide; that stretch reads ITNNYIRGAARKVTPWRRNLKTR. Intrachain disulfides connect C45–C58, C53–C70, C60–C75, and C69–C81. 6'-bromotryptophan is present on W59. P65 is modified (4-hydroxyproline). Residues W79 and W80 each carry the 6'-bromotryptophan modification. At P82 the chain carries 4-hydroxyproline. The residue at position 86 (W86) is a 6'-bromotryptophan.

In terms of tissue distribution, expressed by the venom duct.

The protein localises to the secreted. Its function is as follows. Mu-conotoxins block voltage-gated sodium channels. This toxin reversibly blocks voltage-gated sodium channel in cephalopods (tested on squid giant-fiber-lobe neurons) with an inhibitor constant (Ki) of 15 nmol/l, with no alteration in the voltage dependence of sodium conductance or on the kinetics of inactivation. Has no effect on sodium channels of the two gastropod S.luhuanus and A.californica (which are not natural prey). In Californiconus californicus (California cone), this protein is Mu-conotoxin cal12b.